Reading from the N-terminus, the 515-residue chain is Maturase K (515 aa).

This sequence belongs to the intron maturase 2 family. MatK subfamily.

The protein resides in the plastid. Its subcellular location is the chloroplast. In terms of biological role, usually encoded in the trnK tRNA gene intron. Probably assists in splicing its own and other chloroplast group II introns. The polypeptide is Maturase K (Picea mariana (Black spruce)).